The sequence spans 332 residues: MSHKILELYSGIGGMHCAWKESGLDGEIVAAVDINTVANSVYKHNFPETNLLNRNIQQLTPQVIKKWNVDTILMSPPCQPFTRNGKYLDDNDPRTNSFLYIIGILDQLDNVDYILMENVKGFENSTVRNLFIDKLKECNFIYQEFLLCPSTVGVPNSRLRYYCTARRNNLTWPFKRGDEIITRLPKDFGVPHSLESIIEEDVDEKFLVPDKILRCAKVFDICYKTSKRSCCFTKAYTHYADGTGSIFTDKPREVVQKCYEEANQNEIGSEKFVELFKELKLRYFTPKEVLMIMCFPKSYNLPTNISMKQCYRLLGNSVNVKVISELLKILFE.

One can recognise an SAM-dependent MTase C5-type domain in the interval 3-332; the sequence is HKILELYSGI…ISELLKILFE (330 aa). Residues 12–14, 33–34, 55–56, and serine 75 contribute to the S-adenosyl-L-homocysteine site; these read IGG, DI, and NI. Residue cysteine 78 is part of the active site. S-adenosyl-L-homocysteine-binding positions include glutamine 79, serine 97, and 316–317; that span reads NS.

It belongs to the class I-like SAM-binding methyltransferase superfamily. C5-methyltransferase family.

The protein resides in the cytoplasm. The protein localises to the nucleus. It catalyses the reaction cytidine(38) in tRNA + S-adenosyl-L-methionine = 5-methylcytidine(38) in tRNA + S-adenosyl-L-homocysteine + H(+). The enzyme catalyses a 2'-deoxycytidine in DNA + S-adenosyl-L-methionine = a 5-methyl-2'-deoxycytidine in DNA + S-adenosyl-L-homocysteine + H(+). Specifically methylates cytosine 38 in the anticodon loop of tRNA(Asp). Also has DNA (cytosine-5)-methyltransferase activity. Shows affinity for both tRNA(Asp) and DNA substrates. The chain is tRNA (cytosine(38)-C(5))-methyltransferase from Spodoptera frugiperda (Fall armyworm).